The sequence spans 229 residues: Putative N-acetylmannosamine-6-phosphate 2-epimerase (229 aa).

The protein belongs to the NanE family.

It catalyses the reaction an N-acyl-D-glucosamine 6-phosphate = an N-acyl-D-mannosamine 6-phosphate. Its pathway is amino-sugar metabolism; N-acetylneuraminate degradation; D-fructose 6-phosphate from N-acetylneuraminate: step 3/5. Its function is as follows. Converts N-acetylmannosamine-6-phosphate (ManNAc-6-P) to N-acetylglucosamine-6-phosphate (GlcNAc-6-P). This Haemophilus ducreyi (strain 35000HP / ATCC 700724) protein is Putative N-acetylmannosamine-6-phosphate 2-epimerase.